The following is a 209-amino-acid chain: Yop proteins translocation protein K (209 aa).

Functionally, belongs to an operon involved in the translocation of Yop proteins across the bacterial membranes or in the specific control of this function. The protein is Yop proteins translocation protein K (yscK) of Yersinia enterocolitica.